A 242-amino-acid polypeptide reads, in one-letter code: Venom nerve growth factor (242 aa).

The first 18 residues, 1-18 (MSMMCYTLIIAFLIGIWA), serve as a signal peptide directing secretion. A propeptide spanning residues 19–125 (APKSEDNVPL…TLNRNIRAKR (107 aa)) is cleaved from the precursor. Positions 47–66 (GLKTSRNTDQRHPAPKKAED) are enriched in basic and acidic residues. A disordered region spans residues 47–70 (GLKTSRNTDQRHPAPKKAEDQELG). Cystine bridges form between Cys-139/Cys-203, Cys-181/Cys-231, and Cys-191/Cys-233. Asn-166 carries an N-linked (GlcNAc...) asparagine glycan.

Belongs to the NGF-beta family. In terms of assembly, homodimer; non-covalently linked. Expressed by the venom gland.

Its subcellular location is the secreted. In terms of biological role, nerve growth factor is important for the development and maintenance of the sympathetic and sensory nervous systems. It stimulates division and differentiation of sympathetic and embryonic sensory neurons as well as basal forebrain cholinergic neurons in the brain. Its relevance in the snake venom is not clear. However, it has been shown to inhibit metalloproteinase-dependent proteolysis of platelet glycoprotein Ib alpha, suggesting a metalloproteinase inhibition to prevent metalloprotease autodigestion and/or protection against prey proteases. Binds a lipid between the two protein chains in the homodimer. The lipid-bound form promotes histamine relase from mouse mast cells, contrary to the lipid-free form. The protein is Venom nerve growth factor of Drysdalia coronoides (White-lipped snake).